The chain runs to 339 residues: Dihydroorotate dehydrogenase (quinone) (339 aa).

FMN contacts are provided by residues 62–66 (AGLDK) and Thr-86. Lys-66 serves as a coordination point for substrate. Substrate is bound at residue 111–115 (NRMGF). FMN-binding residues include Asn-139 and Asn-172. Asn-172 contacts substrate. Ser-175 (nucleophile) is an active-site residue. A substrate-binding site is contributed by Asn-177. Residues Lys-217 and Thr-245 each coordinate FMN. Residue 246–247 (NT) participates in substrate binding. FMN contacts are provided by residues Gly-268, Gly-297, and 318-319 (YS).

The protein belongs to the dihydroorotate dehydrogenase family. Type 2 subfamily. In terms of assembly, monomer. FMN is required as a cofactor.

Its subcellular location is the cell membrane. The enzyme catalyses (S)-dihydroorotate + a quinone = orotate + a quinol. The protein operates within pyrimidine metabolism; UMP biosynthesis via de novo pathway; orotate from (S)-dihydroorotate (quinone route): step 1/1. Catalyzes the conversion of dihydroorotate to orotate with quinone as electron acceptor. In Shewanella frigidimarina (strain NCIMB 400), this protein is Dihydroorotate dehydrogenase (quinone).